The primary structure comprises 264 residues: S-adenosylmethionine decarboxylase proenzyme (264 aa).

Residue S114 is the Schiff-base intermediate with substrate; via pyruvic acid of the active site. Position 114 is a pyruvic acid (Ser); by autocatalysis (S114). The Proton acceptor; for processing activity role is filled by H119. Residue C142 is the Proton donor; for catalytic activity of the active site.

Belongs to the prokaryotic AdoMetDC family. Type 2 subfamily. Heterooctamer of four alpha and four beta chains arranged as a tetramer of alpha/beta heterodimers. The cofactor is pyruvate. Post-translationally, is synthesized initially as an inactive proenzyme. Formation of the active enzyme involves a self-maturation process in which the active site pyruvoyl group is generated from an internal serine residue via an autocatalytic post-translational modification. Two non-identical subunits are generated from the proenzyme in this reaction, and the pyruvate is formed at the N-terminus of the alpha chain, which is derived from the carboxyl end of the proenzyme. The post-translation cleavage follows an unusual pathway, termed non-hydrolytic serinolysis, in which the side chain hydroxyl group of the serine supplies its oxygen atom to form the C-terminus of the beta chain, while the remainder of the serine residue undergoes an oxidative deamination to produce ammonia and the pyruvoyl group blocking the N-terminus of the alpha chain.

It catalyses the reaction S-adenosyl-L-methionine + H(+) = S-adenosyl 3-(methylsulfanyl)propylamine + CO2. It functions in the pathway amine and polyamine biosynthesis; S-adenosylmethioninamine biosynthesis; S-adenosylmethioninamine from S-adenosyl-L-methionine: step 1/1. Functionally, catalyzes the decarboxylation of S-adenosylmethionine to S-adenosylmethioninamine (dcAdoMet), the propylamine donor required for the synthesis of the polyamines spermine and spermidine from the diamine putrescine. This is S-adenosylmethionine decarboxylase proenzyme from Chromohalobacter salexigens (strain ATCC BAA-138 / DSM 3043 / CIP 106854 / NCIMB 13768 / 1H11).